The following is a 575-amino-acid chain: Chaperonin 60 subunit alpha 2, chloroplastic (575 aa).

Residues 1–18 show a composition bias toward low complexity; that stretch reads MFAVSPSSFSPTTISPRR. The segment at 1 to 27 is disordered; sequence MFAVSPSSFSPTTISPRRSGQRNEPRK. Residues 1 to 32 constitute a chloroplast transit peptide; that stretch reads MFAVSPSSFSPTTISPRRSGQRNEPRKFSVVR.

This sequence belongs to the chaperonin (HSP60) family. Part of the Cpn60 complex composed of 7 alpha and 7 beta subunits.

It localises to the plastid. The protein localises to the chloroplast. Functionally, involved in protein assisted folding. This is Chaperonin 60 subunit alpha 2, chloroplastic (CPN60A2) from Arabidopsis thaliana (Mouse-ear cress).